The sequence spans 72 residues: Threonine dehydratase operon activator protein (72 aa).

Its function is as follows. Probable trans-acting positive activator for the tdc operon. This is Threonine dehydratase operon activator protein (tdcR) from Escherichia coli (strain K12).